Here is a 439-residue protein sequence, read N- to C-terminus: Probable glycine dehydrogenase (decarboxylating) subunit 1 (439 aa).

It belongs to the GcvP family. N-terminal subunit subfamily. The glycine cleavage system is composed of four proteins: P, T, L and H. In this organism, the P 'protein' is a heterodimer of two subunits.

It catalyses the reaction N(6)-[(R)-lipoyl]-L-lysyl-[glycine-cleavage complex H protein] + glycine + H(+) = N(6)-[(R)-S(8)-aminomethyldihydrolipoyl]-L-lysyl-[glycine-cleavage complex H protein] + CO2. In terms of biological role, the glycine cleavage system catalyzes the degradation of glycine. The P protein binds the alpha-amino group of glycine through its pyridoxal phosphate cofactor; CO(2) is released and the remaining methylamine moiety is then transferred to the lipoamide cofactor of the H protein. The polypeptide is Probable glycine dehydrogenase (decarboxylating) subunit 1 (Aquifex aeolicus (strain VF5)).